Consider the following 445-residue polypeptide: UPF0210 protein SMU_73 (445 aa).

Belongs to the UPF0210 family. As to quaternary structure, homodimer.

The chain is UPF0210 protein SMU_73 from Streptococcus mutans serotype c (strain ATCC 700610 / UA159).